The sequence spans 730 residues: Dynein axonemal intermediate chain 7 (730 aa).

Positions 1-14 (MAPKSKKAPSKKKM) are enriched in basic residues. Residues 1-20 (MAPKSKKAPSKKKMTKAERL) form a disordered region.

Belongs to the DNAI7 family. As to quaternary structure, part of the multisubunit axonemal dynein complex formed at least of two heavy chains and a number of intermediate and light chains. Interacts with tubulin. Associates with microtubule. Post-translationally, ubiquitinated. Ubiquitination leads to its degradation through the 26S proteasome. Ubiquitin-proteasome-mediated DNAI7 degradation occurs in mitosis. As to expression, high expressed in lung, kidney, and testis.

It localises to the cell projection. The protein localises to the cilium. It is found in the cytoplasm. Functionally, via its association with the multisubunit axonemal dynein complex, is potentially involved in the regulation of cilia function. May also act as a cell cycle regulator. The sequence is that of Dynein axonemal intermediate chain 7 (Dnai7) from Mus musculus (Mouse).